The following is a 114-amino-acid chain: DNA-binding protein Mbur_0117 (114 aa).

A disordered region spans residues 14–37 (ELQQQQSSPQNDAQAAYQQEQAQA). Residues 16–35 (QQQQSSPQNDAQAAYQQEQA) are compositionally biased toward low complexity.

It belongs to the PDCD5 family.

The sequence is that of DNA-binding protein Mbur_0117 from Methanococcoides burtonii (strain DSM 6242 / NBRC 107633 / OCM 468 / ACE-M).